The chain runs to 561 residues: Embryonal Fyn-associated substrate (561 aa).

Positions 5 to 68 (TSTQLARALY…PANRVKLLPA (64 aa)) constitute an SH3 domain. Disordered regions lie at residues 68–123 (AGPA…CPPS), 171–215 (HPLT…PGPP), 240–372 (LADG…HNEY), and 390–422 (DKAQGSRPPDQACTGDPELPERGMPAPQEALSP). The span at 103–123 (VPPPARPCPTSGPPAGPCPPS) shows a compositional bias: pro residues. Y253 is modified (phosphotyrosine; by SRC). 2 short sequence motifs (SH3-binding) span residues 305-311 (RPLPALP) and 335-341 (RPLPPPP). Residues 308–325 (PALPVPEAPSPSPVPSPA) show a composition bias toward pro residues. The segment covering 352–372 (VEGDPEGREMEDDPAGHHNEY) has biased composition (basic and acidic residues). Residues 438–488 (FYAGQCQSHYSALQAAVAALMSSTQANQPPRLFVPHSKRVVVAAHRLVFVG) are divergent helix-loop-helix motif.

This sequence belongs to the CAS family. Post-translationally, phosphorylated on multiple tyrosine residues. Phosphorylated on tyrosines by FYN and SRC. As to expression, the protein has been detected in lung and placenta.

Its function is as follows. Docking protein which plays a central coordinating role for tyrosine-kinase-based signaling related to cell adhesion. May serve as an activator of SRC and a downstream effector. Interacts with the SH3 domain of FYN and with CRK, SRC, and YES. The chain is Embryonal Fyn-associated substrate (EFS) from Homo sapiens (Human).